The chain runs to 136 residues: Holo-[acyl-carrier-protein] synthase (136 aa).

Residues Asp-8 and Glu-57 each coordinate Mg(2+).

This sequence belongs to the P-Pant transferase superfamily. AcpS family. Mg(2+) serves as cofactor.

It localises to the cytoplasm. It carries out the reaction apo-[ACP] + CoA = holo-[ACP] + adenosine 3',5'-bisphosphate + H(+). Transfers the 4'-phosphopantetheine moiety from coenzyme A to a Ser of acyl-carrier-protein. The sequence is that of Holo-[acyl-carrier-protein] synthase from Methylorubrum populi (strain ATCC BAA-705 / NCIMB 13946 / BJ001) (Methylobacterium populi).